The primary structure comprises 159 residues: Dihydrofolate reductase (159 aa).

Residues 2-157 form the DHFR domain; sequence TLSILVAHDL…IPHTFLHLIR (156 aa). Substrate is bound at residue 6–8; the sequence is LVA. Residues 7–8 and 15–20 each bind NADP(+); these read VA and IGFENQ. Aspartate 28 contributes to the substrate binding site. 44–47 is a binding site for NADP(+); the sequence is GRKT. Arginine 58 is a binding site for substrate. Residues 63–66 and 93–98 each bind NADP(+); these read LTSD and FGGQTL. Threonine 112 is a substrate binding site.

This sequence belongs to the dihydrofolate reductase family.

It carries out the reaction (6S)-5,6,7,8-tetrahydrofolate + NADP(+) = 7,8-dihydrofolate + NADPH + H(+). The protein operates within cofactor biosynthesis; tetrahydrofolate biosynthesis; 5,6,7,8-tetrahydrofolate from 7,8-dihydrofolate: step 1/1. Its function is as follows. Key enzyme in folate metabolism. Catalyzes an essential reaction for de novo glycine and purine synthesis, and for DNA precursor synthesis. This chain is Dihydrofolate reductase (folA), found in Staphylococcus aureus (strain COL).